The primary structure comprises 444 residues: Signal recognition particle 54 kDa protein (444 aa).

Residues 106–113, 187–191, and 245–248 contribute to the GTP site; these read GLQGSGKT, DTAGR, and SKLD.

It belongs to the GTP-binding SRP family. SRP54 subfamily. As to quaternary structure, part of the signal recognition particle protein translocation system, which is composed of SRP and FtsY. Archaeal SRP consists of a 7S RNA molecule of 300 nucleotides and two protein subunits: SRP54 and SRP19.

Its subcellular location is the cytoplasm. The enzyme catalyses GTP + H2O = GDP + phosphate + H(+). In terms of biological role, involved in targeting and insertion of nascent membrane proteins into the cytoplasmic membrane. Binds to the hydrophobic signal sequence of the ribosome-nascent chain (RNC) as it emerges from the ribosomes. The SRP-RNC complex is then targeted to the cytoplasmic membrane where it interacts with the SRP receptor FtsY. The chain is Signal recognition particle 54 kDa protein from Methanosphaera stadtmanae (strain ATCC 43021 / DSM 3091 / JCM 11832 / MCB-3).